A 332-amino-acid polypeptide reads, in one-letter code: Methylthioribose-1-phosphate isomerase (332 aa).

Substrate is bound by residues 44–46, R87, and Q192; that span reads RGA. Catalysis depends on D233, which acts as the Proton donor. Residue 243-244 participates in substrate binding; it reads NK.

This sequence belongs to the eIF-2B alpha/beta/delta subunits family. MtnA subfamily.

It catalyses the reaction 5-(methylsulfanyl)-alpha-D-ribose 1-phosphate = 5-(methylsulfanyl)-D-ribulose 1-phosphate. It participates in amino-acid biosynthesis; L-methionine biosynthesis via salvage pathway; L-methionine from S-methyl-5-thio-alpha-D-ribose 1-phosphate: step 1/6. In terms of biological role, catalyzes the interconversion of methylthioribose-1-phosphate (MTR-1-P) into methylthioribulose-1-phosphate (MTRu-1-P). In Dehalococcoides mccartyi (strain ATCC BAA-2100 / JCM 16839 / KCTC 5957 / BAV1), this protein is Methylthioribose-1-phosphate isomerase.